A 169-amino-acid chain; its full sequence is Protein-export protein SecB (169 aa).

This sequence belongs to the SecB family. As to quaternary structure, homotetramer, a dimer of dimers. One homotetramer interacts with 1 SecA dimer.

It localises to the cytoplasm. One of the proteins required for the normal export of preproteins out of the cell cytoplasm. It is a molecular chaperone that binds to a subset of precursor proteins, maintaining them in a translocation-competent state. It also specifically binds to its receptor SecA. The sequence is that of Protein-export protein SecB from Pseudoalteromonas atlantica (strain T6c / ATCC BAA-1087).